A 78-amino-acid polypeptide reads, in one-letter code: Pro-glucagon (78 aa).

Belongs to the glucagon family.

It is found in the secreted. In terms of biological role, plays a key role in glucose metabolism and homeostasis. Regulates blood glucose by increasing gluconeogenesis and decreasing glycolysis. The polypeptide is Pro-glucagon (gcg) (Atractosteus spatula (Alligator gar)).